A 327-amino-acid chain; its full sequence is Thiamine-binding periplasmic protein (327 aa).

The first 18 residues, 1 to 18 (MLKKCLPLLLLCTAPVFA), serve as a signal peptide directing secretion. Thiamine-binding positions include 59 to 60 (DG), 161 to 162 (ST), Trp-197, and 215 to 218 (YTTS).

The protein belongs to the bacterial solute-binding protein 1 family. In terms of assembly, monomer in solution. The complex is composed of two ATP-binding proteins (ThiQ), two transmembrane proteins (ThiP) and a solute-binding protein (ThiB).

It is found in the periplasm. With respect to regulation, transport is inhibited by the sulfhydryl-specific modifier N-ethylmaleimide. Its function is as follows. Part of the ABC transporter complex ThiBPQ involved in thiamine import. Binds thiamine, thiamine phosphate and thiamine diphosphate with high affinity. The protein is Thiamine-binding periplasmic protein (thiB) of Escherichia coli (strain K12).